Reading from the N-terminus, the 355-residue chain is Uroporphyrinogen decarboxylase (355 aa).

Substrate is bound by residues 27 to 31, phenylalanine 46, aspartate 77, tyrosine 154, serine 209, and histidine 327; that span reads RQAGR.

This sequence belongs to the uroporphyrinogen decarboxylase family. As to quaternary structure, homodimer.

It localises to the cytoplasm. It catalyses the reaction uroporphyrinogen III + 4 H(+) = coproporphyrinogen III + 4 CO2. It functions in the pathway porphyrin-containing compound metabolism; protoporphyrin-IX biosynthesis; coproporphyrinogen-III from 5-aminolevulinate: step 4/4. Catalyzes the decarboxylation of four acetate groups of uroporphyrinogen-III to yield coproporphyrinogen-III. The protein is Uroporphyrinogen decarboxylase of Nitrosomonas europaea (strain ATCC 19718 / CIP 103999 / KCTC 2705 / NBRC 14298).